The following is a 698-amino-acid chain: Elongation factor G (698 aa).

Residues 10-285 form the tr-type G domain; that stretch reads DKTRNIGIMA…GVVDYLPSPL (276 aa). GTP is bound by residues 19-26, 83-87, and 137-140; these read AHIDAGKT, DTPGH, and NKMD.

The protein belongs to the TRAFAC class translation factor GTPase superfamily. Classic translation factor GTPase family. EF-G/EF-2 subfamily.

Its subcellular location is the cytoplasm. Catalyzes the GTP-dependent ribosomal translocation step during translation elongation. During this step, the ribosome changes from the pre-translocational (PRE) to the post-translocational (POST) state as the newly formed A-site-bound peptidyl-tRNA and P-site-bound deacylated tRNA move to the P and E sites, respectively. Catalyzes the coordinated movement of the two tRNA molecules, the mRNA and conformational changes in the ribosome. This chain is Elongation factor G, found in Lactobacillus johnsonii (strain CNCM I-12250 / La1 / NCC 533).